A 383-amino-acid polypeptide reads, in one-letter code: Succinyl-diaminopimelate desuccinylase (383 aa).

Position 73 (His-73) interacts with Zn(2+). Asp-75 is an active-site residue. Zn(2+) is bound at residue Asp-107. Glu-141 (proton acceptor) is an active-site residue. Positions 142, 170, and 356 each coordinate Zn(2+).

This sequence belongs to the peptidase M20A family. DapE subfamily. As to quaternary structure, homodimer. Requires Zn(2+) as cofactor. The cofactor is Co(2+).

It catalyses the reaction N-succinyl-(2S,6S)-2,6-diaminopimelate + H2O = (2S,6S)-2,6-diaminopimelate + succinate. It functions in the pathway amino-acid biosynthesis; L-lysine biosynthesis via DAP pathway; LL-2,6-diaminopimelate from (S)-tetrahydrodipicolinate (succinylase route): step 3/3. Catalyzes the hydrolysis of N-succinyl-L,L-diaminopimelic acid (SDAP), forming succinate and LL-2,6-diaminopimelate (DAP), an intermediate involved in the bacterial biosynthesis of lysine and meso-diaminopimelic acid, an essential component of bacterial cell walls. This Pseudomonas aeruginosa (strain UCBPP-PA14) protein is Succinyl-diaminopimelate desuccinylase.